Reading from the N-terminus, the 350-residue chain is fMet-Leu-Phe receptor (350 aa).

Over 1 to 27 (METNSSLPTNISGGTPAVSAGYLFLDI) the chain is Extracellular. 2 N-linked (GlcNAc...) asparagine glycosylation sites follow: Asn-4 and Asn-10. The helical transmembrane segment at 28–50 (ITYLVFAVTFVLGVLGNGLVIWV) threads the bilayer. At 51–61 (AGFRMTHTVTT) the chain is on the cytoplasmic side. A helical membrane pass occupies residues 62–83 (ISYLNLAVADFCFTSTLPFFMV). Topologically, residues 84-100 (RKAMGGHWPFGWFLCKF) are extracellular. The cysteines at positions 98 and 176 are disulfide-linked. A helical transmembrane segment spans residues 101 to 121 (VFTIVDINLFGSVFLIALIAL). The Cytoplasmic portion of the chain corresponds to 122 to 140 (DRCVCVLHPVWTQNHRTVS). A helical membrane pass occupies residues 141-162 (LAKKVIIGPWVMALLLTLPVII). Residues 163–205 (RVTTVPGKTGTVACTFNFSPWTNDPKERINVAVAMLTVRGIIR) lie on the Extracellular side of the membrane. A helical transmembrane segment spans residues 206–226 (FIIGFSAPMSIVAVSYGLIAT). Over 227-242 (KIHKQGLIKSSRPLRV) the chain is Cytoplasmic. The helical transmembrane segment at 243-266 (LSFVAAAFFLCWSPYQVVALIATV) threads the bilayer. The Extracellular segment spans residues 267-285 (RIRELLQGMYKEIGIAVDV). Residues 286 to 305 (TSALAFFNSCLNPMLYVFMG) form a helical membrane-spanning segment. Residues 306-350 (QDFRERLIHALPASLERALTEDSTQTSDTATNSTLPSAEVELQAK) lie on the Cytoplasmic side of the membrane. The tract at residues 325–350 (TEDSTQTSDTATNSTLPSAEVELQAK) is disordered. Residues 326–341 (EDSTQTSDTATNSTLP) are compositionally biased toward polar residues. At Ser-328 the chain carries Phosphoserine. Phosphothreonine occurs at positions 329 and 331. Ser-332 is modified (phosphoserine). 2 positions are modified to phosphothreonine: Thr-334 and Thr-336. Ser-338 bears the Phosphoserine mark. Phosphothreonine is present on Thr-339.

It belongs to the G-protein coupled receptor 1 family. As to quaternary structure, interacts with S.aureus chemotaxis inhibitory protein (CHIPS); the interaction blocks the receptor and may thus inhibit the immune response. Phosphorylated; which is necessary for desensitization. In terms of tissue distribution, neutrophils.

It is found in the cell membrane. In terms of biological role, high affinity receptor for N-formyl-methionyl peptides (fMLP), which are powerful neutrophil chemotactic factors. Binding of fMLP to the receptor stimulates intracellular calcium mobilization and superoxide anion release. This response is mediated via a G-protein that activates a phosphatidylinositol-calcium second messenger system. Receptor for TAFA4, mediates its effects on chemoattracting macrophages, promoting phagocytosis and increasing ROS release. Receptor for cathepsin CTSG, leading to increased phagocyte chemotaxis. The sequence is that of fMet-Leu-Phe receptor (FPR1) from Homo sapiens (Human).